The following is a 101-amino-acid chain: Iron-sulfur cluster assembly protein CyaY (101 aa).

The protein belongs to the frataxin family.

Its function is as follows. Involved in iron-sulfur (Fe-S) cluster assembly. May act as a regulator of Fe-S biogenesis. This chain is Iron-sulfur cluster assembly protein CyaY, found in Haemophilus influenzae (strain 86-028NP).